Reading from the N-terminus, the 428-residue chain is Enolase (428 aa).

Position 163 (Q163) interacts with (2R)-2-phosphoglycerate. E205 acts as the Proton donor in catalysis. Residues D242, E286, and D313 each coordinate Mg(2+). (2R)-2-phosphoglycerate contacts are provided by K338, R367, S368, and K389. Residue K338 is the Proton acceptor of the active site.

The protein belongs to the enolase family. Mg(2+) is required as a cofactor.

The protein resides in the cytoplasm. It localises to the secreted. It is found in the cell surface. It carries out the reaction (2R)-2-phosphoglycerate = phosphoenolpyruvate + H2O. It functions in the pathway carbohydrate degradation; glycolysis; pyruvate from D-glyceraldehyde 3-phosphate: step 4/5. Catalyzes the reversible conversion of 2-phosphoglycerate (2-PG) into phosphoenolpyruvate (PEP). It is essential for the degradation of carbohydrates via glycolysis. The polypeptide is Enolase (Bordetella bronchiseptica (strain ATCC BAA-588 / NCTC 13252 / RB50) (Alcaligenes bronchisepticus)).